The chain runs to 120 residues: Chaperonin GroEL (120 aa).

Position 23-27 (23-27 (DGTTT)) interacts with ATP.

This sequence belongs to the chaperonin (HSP60) family. In terms of assembly, forms a cylinder of 14 subunits composed of two heptameric rings stacked back-to-back. Interacts with the co-chaperonin GroES.

The protein localises to the cytoplasm. It catalyses the reaction ATP + H2O + a folded polypeptide = ADP + phosphate + an unfolded polypeptide.. Its function is as follows. Together with its co-chaperonin GroES, plays an essential role in assisting protein folding. The GroEL-GroES system forms a nano-cage that allows encapsulation of the non-native substrate proteins and provides a physical environment optimized to promote and accelerate protein folding. The protein is Chaperonin GroEL of Mycolicibacterium vaccae (Mycobacterium vaccae).